The chain runs to 78 residues: Acyl carrier protein (78 aa).

Residues 2–77 (SDIEARVKKI…NAIDYANTHQ (76 aa)) enclose the Carrier domain. Position 37 is an O-(pantetheine 4'-phosphoryl)serine (Ser-37).

It belongs to the acyl carrier protein (ACP) family. In terms of processing, 4'-phosphopantetheine is transferred from CoA to a specific serine of apo-ACP by AcpS. This modification is essential for activity because fatty acids are bound in thioester linkage to the sulfhydryl of the prosthetic group.

Its subcellular location is the cytoplasm. It functions in the pathway lipid metabolism; fatty acid biosynthesis. Carrier of the growing fatty acid chain in fatty acid biosynthesis. This is Acyl carrier protein from Comamonas testosteroni (Pseudomonas testosteroni).